A 360-amino-acid chain; its full sequence is Phospho-N-acetylmuramoyl-pentapeptide-transferase (360 aa).

The next 10 helical transmembrane spans lie at 25 to 45, 73 to 93, 97 to 117, 132 to 152, 168 to 188, 199 to 219, 236 to 256, 263 to 283, 288 to 308, and 338 to 358; these read RGIL…PWMI, TMGG…WADL, YVWV…VDDY, WKYF…YMTA, VSIP…VGSS, GLAI…CYLS, AGEL…FLWF, VFMG…IAVI, VVLF…IIQV, and VIVR…ATLK.

Belongs to the glycosyltransferase 4 family. MraY subfamily. Requires Mg(2+) as cofactor.

The protein localises to the cell inner membrane. The enzyme catalyses UDP-N-acetyl-alpha-D-muramoyl-L-alanyl-gamma-D-glutamyl-meso-2,6-diaminopimeloyl-D-alanyl-D-alanine + di-trans,octa-cis-undecaprenyl phosphate = di-trans,octa-cis-undecaprenyl diphospho-N-acetyl-alpha-D-muramoyl-L-alanyl-D-glutamyl-meso-2,6-diaminopimeloyl-D-alanyl-D-alanine + UMP. It functions in the pathway cell wall biogenesis; peptidoglycan biosynthesis. Catalyzes the initial step of the lipid cycle reactions in the biosynthesis of the cell wall peptidoglycan: transfers peptidoglycan precursor phospho-MurNAc-pentapeptide from UDP-MurNAc-pentapeptide onto the lipid carrier undecaprenyl phosphate, yielding undecaprenyl-pyrophosphoryl-MurNAc-pentapeptide, known as lipid I. This is Phospho-N-acetylmuramoyl-pentapeptide-transferase from Ectopseudomonas mendocina (strain ymp) (Pseudomonas mendocina).